A 406-amino-acid polypeptide reads, in one-letter code: Argininosuccinate synthase (406 aa).

Position 9–17 (Ala9–Ser17) interacts with ATP. An L-citrulline-binding site is contributed by Tyr86. Residue Gly116 participates in ATP binding. L-aspartate-binding residues include Thr118, Asn122, and Asp123. An L-citrulline-binding site is contributed by Asn122. L-citrulline contacts are provided by Arg126, Ser174, Ser183, Glu259, and Tyr271.

The protein belongs to the argininosuccinate synthase family. Type 1 subfamily. In terms of assembly, homotetramer.

It is found in the cytoplasm. The enzyme catalyses L-citrulline + L-aspartate + ATP = 2-(N(omega)-L-arginino)succinate + AMP + diphosphate + H(+). It functions in the pathway amino-acid biosynthesis; L-arginine biosynthesis; L-arginine from L-ornithine and carbamoyl phosphate: step 2/3. This Geobacillus kaustophilus (strain HTA426) protein is Argininosuccinate synthase.